The primary structure comprises 362 residues: 3-isopropylmalate dehydrogenase (362 aa).

NAD(+) is bound at residue 78-91; sequence GPKWESLPPDEQPE. Substrate-binding residues include Arg99, Arg109, Arg138, and Asp227. Mg(2+)-binding residues include Asp227, Asp251, and Asp255. An NAD(+)-binding site is contributed by 285-297; the sequence is GSAPDIAGQGIAN.

This sequence belongs to the isocitrate and isopropylmalate dehydrogenases family. LeuB type 1 subfamily. In terms of assembly, homodimer. Requires Mg(2+) as cofactor. Mn(2+) is required as a cofactor.

The protein resides in the cytoplasm. The catalysed reaction is (2R,3S)-3-isopropylmalate + NAD(+) = 4-methyl-2-oxopentanoate + CO2 + NADH. The protein operates within amino-acid biosynthesis; L-leucine biosynthesis; L-leucine from 3-methyl-2-oxobutanoate: step 3/4. Functionally, catalyzes the oxidation of 3-carboxy-2-hydroxy-4-methylpentanoate (3-isopropylmalate) to 3-carboxy-4-methyl-2-oxopentanoate. The product decarboxylates to 4-methyl-2 oxopentanoate. In Geobacter sulfurreducens (strain ATCC 51573 / DSM 12127 / PCA), this protein is 3-isopropylmalate dehydrogenase.